The following is a 429-amino-acid chain: Cleavage stimulation factor subunit 50 (429 aa).

The hydrophobic stretch occupies residues 20-41 (LNALIVAHLRHHNLSQVASAVA). 7 WD repeats span residues 121-160 (EHKSVVRCARFSPDGMFFATGGADTSIKLFEVPKVKQMIS), 174-213 (DHAEPINDLDFHPRSTILISSAKDNCIKFFDFSKTTAKRA), 218-257 (QDTHNVRSISFHPSGEFLLAGTDHPIPHLYDVNTYQCFLP), 264-303 (GVSGAINQVRYSSTGSIYITASKDGAIRLFDGVSAKCVRS), 308-347 (HGKSEVTSAVFTKDQRFVLSSGKDSTVKLWEIGSGRMVKE), 351-392 (AKRV…KVAK), and 396-429 (NHNGAPRWIEHSPVESVFVTCGIDRSIRFWKESV).

In terms of assembly, homodimer. Belongs to the CSTF complex. Forms a complex with cleavage and polyadenylation specificity factor (CPSF) subunits CSTF64, PABN3, CPSF30, FIPS5 and CPSF100.

It is found in the nucleus. Functionally, one of the multiple factors required for polyadenylation and 3'-end cleavage of pre-mRNAs. May be responsible for the interaction of CSTF with other factors to form a stable complex on the pre-mRNA. This is Cleavage stimulation factor subunit 50 from Arabidopsis thaliana (Mouse-ear cress).